The primary structure comprises 1239 residues: MSRLLWRKVAGATVGPGPVPAPGRWVSSSVPASDPSDGQRRRQQQQQQQQQQQQQPQQPQVLSSEGGQLRHNPLDIQMLSRGLHEQIFGQGGEMPGEAAVRRSVEHLQKHGLWGQPAVPLPDVELRLPPLYGDNLDQHFRLLAQKQSLPYLEAANLLLQAQLPPKPPAWAWAEGWTRYGPEGEAVPVAIPEERALVFDVEVCLAEGTCPTLAVAISPSAWYSWCSQRLVEERYSWTSQLSPADLIPLEVPTGASSPTQRDWQEQLVVGHNVSFDRAHIREQYLIQGSRMRFLDTMSMHMAISGLSSFQRSLWIAAKQGKHKVQPPTKQGQKSQRKARRGPAISSWDWLDISSVNSLAEVHRLYVGGPPLEKEPRELFVKGTMKDIRENFQDLMQYCAQDVWATHEVFQQQLPLFLERCPHPVTLAGMLEMGVSYLPVNQNWERYLAEAQGTYEELQREMKKSLMDLANDACQLLSGERYKEDPWLWDLEWDLQEFKQKKAKKVKKEPATASKLPIEGAGAPGDPMDQEDLGPCSEEEEFQQDVMARACLQKLKGTTELLPKRPQHLPGHPGWYRKLCPRLDDPAWTPGPSLLSLQMRVTPKLMALTWDGFPLHYSERHGWGYLVPGRRDNLAKLPTGTTLESAGVVCPYRAIESLYRKHCLEQGKQQLMPQEAGLAEEFLLTDNSAIWQTVEELDYLEVEAEAKMENLRAAVPGQPLALTARGGPKDTQPSYHHGNGPYNDVDIPGCWFFKLPHKDGNSCNVGSPFAKDFLPKMEDGTLQAGPGGASGPRALEINKMISFWRNAHKRISSQMVVWLPRSALPRAVIRHPDYDEEGLYGAILPQVVTAGTITRRAVEPTWLTASNARPDRVGSELKAMVQAPPGYTLVGADVDSQELWIAAVLGDAHFAGMHGCTAFGWMTLQGRKSRGTDLHSKTATTVGISREHAKIFNYGRIYGAGQPFAERLLMQFNHRLTQQEAAEKAQQMYAATKGLRWYRLSDEGEWLVRELNLPVDRTEGGWISLQDLRKVQRETARKSQWKKWEVVAERAWKGGTESEMFNKLESIATSDIPRTPVLGCCISRALEPSAVQEEFMTSRVNWVVQSSAVDYLHLMLVAMKWLFEEFAIDGRFCISIHDEVRYLVREEDRYRAALALQITNLLTRCMFAYKLGLNDLPQSVAFFSAVDIDRCLRKEVTMDCKTPSNPTGMERRYGIPQGEALDIYQIIELTKGSLEKRSQPGP.

The segment at 1-68 is disordered; that stretch reads MSRLLWRKVA…PQVLSSEGGQ (68 aa). 2 stretches are compositionally biased toward low complexity: residues 9 to 36 and 44 to 60; these read VAGA…SDPS and QQQQ…QQPQ. Residues 43 to 55 are does not contribute to polymerase and exonuclease enzymatic activities; the sequence is QQQQQQQQQQQQQ. The Exo I motif lies at 196–200; sequence VFDVE. The active-site Exonuclease activity is Asp-198. Positions 267 to 275 match the Exo II motif; it reads VGHNVSFDR. Ser-306 contacts DNA. Positions 318 to 340 are disordered; that stretch reads GKHKVQPPTKQGQKSQRKARRGP. The Exo III motif lies at 395–403; sequence YCAQDVWAT. The disordered stretch occupies residues 506–531; that stretch reads EPATASKLPIEGAGAPGDPMDQEDLG. Positions 510–571 are accessory-interacting determinant; it reads ASKLPIEGAG…RPQHLPGHPG (62 aa). Arg-579 lines the RNA pocket. DNA is bound at residue Ser-593. His-754, Gly-763, and Lys-768 together coordinate RNA. Positions 806 and 849 each coordinate DNA. Residues 858–864 form a trigger loop region; it reads TWLTASN. Ser-863 and Arg-869 together coordinate RNA. Residues 887–896 carry the Pol A motif; it reads VGADVDSQEL. Residues Asp-890, Val-891, Ser-893, Glu-895, Arg-943, Lys-947, and Tyr-951 each contribute to the a 2'-deoxyribonucleoside 5'-triphosphate site. Mg(2+)-binding residues include Asp-890 and Val-891. Positions 943–958 match the Pol B motif; the sequence is REHAKIFNYGRIYGAG. The DNA site is built by Thr-1094 and Ser-1095. The Pol C motif lies at 1134-1141; it reads HDEVRYLV. An a 2'-deoxyribonucleoside 5'-triphosphate-binding site is contributed by Asp-1135. Residue Asp-1135 coordinates Mg(2+).

Belongs to the DNA polymerase type-A family. Heterotrimer composed of a catalytic subunit and a homodimer of accessory subunits (POLG:POLG2). Interacts with TTC3. Interacts with LIG3. It depends on Mg(2+) as a cofactor.

The protein resides in the mitochondrion. The protein localises to the mitochondrion matrix. Its subcellular location is the mitochondrion nucleoid. It catalyses the reaction DNA(n) + a 2'-deoxyribonucleoside 5'-triphosphate = DNA(n+1) + diphosphate. The enzyme catalyses a 3'-end 2'-deoxyribonucleotidyl-deoxyribonucleotide-DNA + H2O = a 3'-end 2'-deoxyribonucleotide-DNA + a 2'-deoxyribonucleoside 5'-phosphate + H(+). The catalysed reaction is a 5'-end 2'-deoxyribose-2'-deoxyribonucleotide-DNA = (2E,4S)-4-hydroxypenten-2-al-5-phosphate + a 5'-end 5'-phospho-2'-deoxyribonucleoside-DNA + H(+). Inhibited by dideoxynucleotides such as antiviral agent zalcitabine. In terms of biological role, catalytic subunit of DNA polymerase gamma solely responsible for replication of mitochondrial DNA (mtDNA). Replicates both heavy and light strands of the circular mtDNA genome using a single-stranded DNA template, RNA primers and the four deoxyribonucleoside triphosphates as substrates. Has 5' -&gt; 3' polymerase activity. Functionally interacts with TWNK and SSBP1 at the replication fork to form a highly processive replisome, where TWNK unwinds the double-stranded DNA template prior to replication and SSBP1 covers the parental heavy strand to enable continuous replication of the entire mitochondrial genome. A single nucleotide incorporation cycle includes binding of the incoming nucleotide at the insertion site, a phosphodiester bond formation reaction that extends the 3'-end of the primer DNA, and translocation of the primer terminus to the post-insertion site. After completing replication of a mtDNA strand, mediates 3' -&gt; 5' exonucleolytic degradation at the nick to enable proper ligation. Highly accurate due to high nucleotide selectivity and 3' -&gt; 5' exonucleolytic proofreading. Proficiently corrects base substitutions, single-base additions and deletions in non-repetitive sequences and short repeats, but displays lower proofreading activity when replicating longer homopolymeric stretches. Exerts exonuclease activity toward single-stranded DNA and double-stranded DNA containing 3'-terminal mispairs. When a misincorporation occurs, transitions from replication to a pro-nucleolytic editing mode and removes the missincorporated nucleoside in the exonuclease active site. Proceeds via an SN2 nucleolytic mechanism in which Asp-198 catalyzes phosphodiester bond hydrolysis and Glu-200 stabilizes the leaving group. As a result the primer strand becomes one nucleotide shorter and is positioned in the post-insertion site, ready to resume DNA synthesis. Exerts 5'-deoxyribose phosphate (dRP) lyase activity and mediates repair-associated mtDNA synthesis (gap filling) in base-excision repair pathway. Catalyzes the release of the 5'-terminal 2-deoxyribose-5-phosphate sugar moiety from incised apurinic/apyrimidinic (AP) sites to produce a substrate for DNA ligase. The dRP lyase reaction does not require divalent metal ions and likely proceeds via a Schiff base intermediate in a beta-elimination reaction mechanism. This is DNA polymerase subunit gamma-1 from Homo sapiens (Human).